Reading from the N-terminus, the 267-residue chain is Syntaxin-72 (267 aa).

At 1 to 244 (MPVIDIIFRV…QLVQMRSSRN (244 aa)) the chain is on the cytoplasmic side. The stretch at 53–87 (KAELASTEKNRAAAVAMNAEVRRTKARLAEDVVKL) forms a coiled coil. The 63-residue stretch at 173 to 235 (EMRRKKQDEG…KNTNVRLKKQ (63 aa)) folds into the t-SNARE coiled-coil homology domain. The helical; Anchor for type IV membrane protein transmembrane segment at 245-265 (FCIDIILLCVILGIVSYIYNA) threads the bilayer. The Vesicular portion of the chain corresponds to 266–267 (LN).

This sequence belongs to the syntaxin family. As to quaternary structure, part of the t-SNARE complex. In terms of tissue distribution, expressed in root, leaf, stem, flower and silique.

The protein resides in the membrane. Vesicle trafficking protein that functions in the secretory pathway. This is Syntaxin-72 (SYP72) from Arabidopsis thaliana (Mouse-ear cress).